Here is a 230-residue protein sequence, read N- to C-terminus: Ribosomal RNA large subunit methyltransferase E (230 aa).

The segment covering 1-13 has biased composition (gly residues); that stretch reads MSGSGGKGGGRGG. The tract at residues 1 to 22 is disordered; that stretch reads MSGSGGKGGGRGGLHVRVKTAK. 5 residues coordinate S-adenosyl-L-methionine: glycine 81, tryptophan 83, aspartate 100, aspartate 116, and aspartate 140. The active-site Proton acceptor is the lysine 180.

This sequence belongs to the class I-like SAM-binding methyltransferase superfamily. RNA methyltransferase RlmE family.

The protein localises to the cytoplasm. The enzyme catalyses uridine(2552) in 23S rRNA + S-adenosyl-L-methionine = 2'-O-methyluridine(2552) in 23S rRNA + S-adenosyl-L-homocysteine + H(+). Functionally, specifically methylates the uridine in position 2552 of 23S rRNA at the 2'-O position of the ribose in the fully assembled 50S ribosomal subunit. This is Ribosomal RNA large subunit methyltransferase E from Sphingopyxis alaskensis (strain DSM 13593 / LMG 18877 / RB2256) (Sphingomonas alaskensis).